The following is a 393-amino-acid chain: S-adenosylmethionine synthase 2 (393 aa).

Residue glutamate 9 coordinates Mg(2+). Histidine 15 contacts ATP. Glutamate 43 contacts K(+). The L-methionine site is built by glutamate 56 and glutamine 99. ATP-binding positions include 167-169 (DGK), 235-238 (SGRF), aspartate 246, 252-253 (RK), alanine 269, lysine 273, and lysine 277. Position 246 (aspartate 246) interacts with L-methionine. Lysine 277 provides a ligand contact to L-methionine.

Belongs to the AdoMet synthase family. As to quaternary structure, homotetramer. Mn(2+) serves as cofactor. It depends on Mg(2+) as a cofactor. The cofactor is Co(2+). K(+) is required as a cofactor. In terms of tissue distribution, mostly expressed in flowers, seedpods and roots, and, to a lower extent, in stems and leaves.

Its subcellular location is the cytoplasm. The catalysed reaction is L-methionine + ATP + H2O = S-adenosyl-L-methionine + phosphate + diphosphate. It functions in the pathway amino-acid biosynthesis; S-adenosyl-L-methionine biosynthesis; S-adenosyl-L-methionine from L-methionine: step 1/1. Functionally, catalyzes the formation of S-adenosylmethionine from methionine and ATP. The reaction comprises two steps that are both catalyzed by the same enzyme: formation of S-adenosylmethionine (AdoMet) and triphosphate, and subsequent hydrolysis of the triphosphate. This chain is S-adenosylmethionine synthase 2 (MSAMS2), found in Brassica juncea (Indian mustard).